Consider the following 1828-residue polypeptide: Proteasome activator complex subunit 4 (1828 aa).

HEAT repeat units lie at residues 462–506, 985–1024, 1164–1202, 1339–1377, 1621–1659, and 1665–1703; these read PEGP…LVDC, NFCC…NHGG, YVLP…QLKR, DAFL…GSKH, PVQV…YNLF, and EESV…CNFL. The segment at 1635–1723 is bromodomain-like (BRDL); sequence ARSSSWHARY…EALCKTRLPK (89 aa).

This sequence belongs to the BLM10 family. As to quaternary structure, homodimer. Interacts with the 20S and 26S proteasomes.

Its subcellular location is the cytoplasm. It localises to the cytosol. The protein localises to the nucleus. The protein resides in the nucleus speckle. In terms of biological role, associated component of the proteasome that specifically recognizes acetylated histones and promotes ATP- and ubiquitin-independent degradation of core histones during DNA damage response. Recognizes and binds acetylated histones via its bromodomain-like (BRDL) region and activates the proteasome by opening the gated channel for substrate entry. Binds to the core proteasome via its C-terminus, which occupies the same binding sites as the proteasomal ATPases, opening the closed structure of the proteasome via an active gating mechanism. involved in DNA damage response in somatic cells: binds to acetylated histones and promotes degradation of histones. The sequence is that of Proteasome activator complex subunit 4 (psme4) from Xenopus laevis (African clawed frog).